The primary structure comprises 481 residues: Tryptophan biosynthesis protein TrpCF (481 aa).

The interval M1–E283 is indole-3-glycerol phosphate synthase. The interval N284–Y481 is N-(5'-phosphoribosyl)anthranilate isomerase.

It in the N-terminal section; belongs to the TrpC family. In the C-terminal section; belongs to the TrpF family. As to quaternary structure, monomer.

The enzyme catalyses N-(5-phospho-beta-D-ribosyl)anthranilate = 1-(2-carboxyphenylamino)-1-deoxy-D-ribulose 5-phosphate. It catalyses the reaction 1-(2-carboxyphenylamino)-1-deoxy-D-ribulose 5-phosphate + H(+) = (1S,2R)-1-C-(indol-3-yl)glycerol 3-phosphate + CO2 + H2O. Its pathway is amino-acid biosynthesis; L-tryptophan biosynthesis; L-tryptophan from chorismate: step 3/5. It functions in the pathway amino-acid biosynthesis; L-tryptophan biosynthesis; L-tryptophan from chorismate: step 4/5. Its function is as follows. Bifunctional enzyme that catalyzes two sequential steps of tryptophan biosynthetic pathway. The first reaction is catalyzed by the isomerase, coded by the TrpF domain; the second reaction is catalyzed by the synthase, coded by the TrpC domain. The sequence is that of Tryptophan biosynthesis protein TrpCF (trpC) from Vibrio parahaemolyticus serotype O3:K6 (strain RIMD 2210633).